A 561-amino-acid polypeptide reads, in one-letter code: Dihydroxy-acid dehydratase 2 (561 aa).

Cys-53 serves as a coordination point for [2Fe-2S] cluster. Asp-85 serves as a coordination point for Mg(2+). Position 126 (Cys-126) interacts with [2Fe-2S] cluster. Mg(2+) contacts are provided by Asp-127 and Lys-128. Lys-128 carries the post-translational modification N6-carboxylysine. Position 195 (Cys-195) interacts with [2Fe-2S] cluster. Glu-446 is a Mg(2+) binding site. Residue Ser-472 is the Proton acceptor of the active site.

This sequence belongs to the IlvD/Edd family. Homodimer. Requires [2Fe-2S] cluster as cofactor. Mg(2+) serves as cofactor.

It catalyses the reaction (2R)-2,3-dihydroxy-3-methylbutanoate = 3-methyl-2-oxobutanoate + H2O. The catalysed reaction is (2R,3R)-2,3-dihydroxy-3-methylpentanoate = (S)-3-methyl-2-oxopentanoate + H2O. It participates in amino-acid biosynthesis; L-isoleucine biosynthesis; L-isoleucine from 2-oxobutanoate: step 3/4. It functions in the pathway amino-acid biosynthesis; L-valine biosynthesis; L-valine from pyruvate: step 3/4. Its function is as follows. Functions in the biosynthesis of branched-chain amino acids. Catalyzes the dehydration of (2R,3R)-2,3-dihydroxy-3-methylpentanoate (2,3-dihydroxy-3-methylvalerate) into 2-oxo-3-methylpentanoate (2-oxo-3-methylvalerate) and of (2R)-2,3-dihydroxy-3-methylbutanoate (2,3-dihydroxyisovalerate) into 2-oxo-3-methylbutanoate (2-oxoisovalerate), the penultimate precursor to L-isoleucine and L-valine, respectively. This chain is Dihydroxy-acid dehydratase 2, found in Acinetobacter baylyi (strain ATCC 33305 / BD413 / ADP1).